The chain runs to 303 residues: Taste receptor type 2 member 13 (303 aa).

Residues 1–7 lie on the Extracellular side of the membrane; that stretch reads MESALLS. A helical transmembrane segment spans residues 8-28; that stretch reads ILTLVIIAEFVIGNLSNGFXV. Over 29–55 the chain is Cytoplasmic; the sequence is LINCIDWVSKRQLSSVDKILTFLAISR. Residues 56 to 76 traverse the membrane as a helical segment; it reads IGLIWELLVSWFLGLHYLAIF. Topologically, residues 77–85 are extracellular; that stretch reads VSGTGLRIM. The chain crosses the membrane as a helical span at residues 86–106; it reads IFSWVVSNHFSLWLATILSIF. Residues 107–128 are Cytoplasmic-facing; it reads YLLKIASFSSPAFLYLKWRVNQ. A helical transmembrane segment spans residues 129–149; that stretch reads VILMILLGTLVFLFLNLIQIN. Residues 150–184 are Extracellular-facing; sequence IHIKDWLDRCERNTIWNFSMSGLPTFSVPVKFTMT. N-linked (GlcNAc...) asparagine glycosylation occurs at asparagine 166. A helical membrane pass occupies residues 185-205; it reads MFSLAPFTVALISFLLLIFSL. At 206–232 the chain is on the cytoplasmic side; that stretch reads RKHLQKMQLNYKGHREPRTKAHINALK. Residues 233-253 traverse the membrane as a helical segment; it reads IVISFLLLYASFFLCILISWI. Over 254–261 the chain is Extracellular; that stretch reads SELYQNTL. A helical transmembrane segment spans residues 262–282; sequence IHMFCQTIGVFYPSSHSFLLI. Over 283 to 303 the chain is Cytoplasmic; the sequence is LGNPKLRQASLLVAAKVWAKR.

Belongs to the G-protein coupled receptor T2R family.

The protein resides in the membrane. Its function is as follows. Receptor that may play a role in the perception of bitterness and is gustducin-linked. May play a role in sensing the chemical composition of the gastrointestinal content. The activity of this receptor may stimulate alpha gustducin, mediate PLC-beta-2 activation and lead to the gating of TRPM5. In Papio hamadryas (Hamadryas baboon), this protein is Taste receptor type 2 member 13 (TAS2R13).